The following is a 368-amino-acid chain: Protein mab-21-like 3 (368 aa).

Belongs to the mab-21 family.

The sequence is that of Protein mab-21-like 3 (mab21L3) from Xenopus laevis (African clawed frog).